Consider the following 657-residue polypeptide: Katanin p80 WD40 repeat-containing subunit B1 (657 aa).

WD repeat units lie at residues 18–58 (AHSS…CVMS), 61–100 (GHTT…ILRT), 103–142 (GHKA…CIFK), 145–184 (SHTQ…VMFE), 187–226 (GHSG…VVSC), and 229–269 (EEAT…DVVV). Disordered stretches follow at residues 318-410 (NNEL…EDEP) and 423-454 (VEVQ…RAEP). Residues 325-345 (PTPTGSSLRRSYDRPSTSCSK) show a composition bias toward polar residues. A compositionally biased stretch (basic and acidic residues) spans 351–385 (HSSESERRSPSSEEDRDEKESKAEIQNPEDYKEIF).

This sequence belongs to the WD repeat KATNB1 family. Interacts with KATNA1. This interaction enhances the microtubule binding and severing activity of KATNA1 and also targets this activity to the centrosome.

It localises to the cytoplasm. The protein localises to the cytoskeleton. The protein resides in the microtubule organizing center. It is found in the centrosome. Its subcellular location is the spindle pole. It localises to the spindle. In terms of biological role, participates in a complex which severs microtubules in an ATP-dependent manner. May act to target the enzymatic subunit of this complex to sites of action such as the centrosome. Microtubule severing may promote rapid reorganization of cellular microtubule arrays and the release of microtubules from the centrosome following nucleation. In Gallus gallus (Chicken), this protein is Katanin p80 WD40 repeat-containing subunit B1.